A 301-amino-acid chain; its full sequence is UDP-N-acetylenolpyruvoylglucosamine reductase (301 aa).

The FAD-binding PCMH-type domain maps to 30–194; that stretch reads VGGEADYLVF…LSVKFALAPG (165 aa). The active site involves arginine 173. The active-site Proton donor is the serine 223. Glutamate 293 is an active-site residue.

Belongs to the MurB family. Requires FAD as cofactor.

The protein localises to the cytoplasm. It carries out the reaction UDP-N-acetyl-alpha-D-muramate + NADP(+) = UDP-N-acetyl-3-O-(1-carboxyvinyl)-alpha-D-glucosamine + NADPH + H(+). It functions in the pathway cell wall biogenesis; peptidoglycan biosynthesis. Functionally, cell wall formation. This is UDP-N-acetylenolpyruvoylglucosamine reductase from Streptococcus pneumoniae (strain 70585).